Consider the following 149-residue polypeptide: Oligosaccharyltransferase complex subunit OSTC (149 aa).

The Cytoplasmic segment spans residues 1–32; that stretch reads METLFRLPFAVLECPNIKLKRPGWVHMPSAMT. A helical transmembrane segment spans residues 33–53; sequence VYALVVVSYFLITGGIIYDVI. At 54-83 the chain is on the extracellular side; sequence VEPPSVGSMTDEHGHQRPVAFLAYRVNGQY. The helical transmembrane segment at 84–104 threads the bilayer; it reads IMEGLASSFLFTMGGLGFIIL. Residues 105-117 lie on the Cytoplasmic side of the membrane; it reads DRSNAPNIPKLNR. A helical transmembrane segment spans residues 118–138; the sequence is FLLLFIGFVSVLLSFFMARVF. The Extracellular segment spans residues 139 to 149; the sequence is MRMKLPGYLMG.

This sequence belongs to the OSTC family. In terms of assembly, specific component of the STT3A-containing form of the oligosaccharyltransferase (OST) complex.

It localises to the membrane. Its pathway is protein modification; protein glycosylation. Its function is as follows. Specific component of the STT3A-containing form of the oligosaccharyl transferase (OST) complex that catalyzes the initial transfer of a defined glycan (Glc(3)Man(9)GlcNAc(2) in eukaryotes) from the lipid carrier dolichol-pyrophosphate to an asparagine residue within an Asn-X-Ser/Thr consensus motif in nascent polypeptide chains, the first step in protein N-glycosylation. N-glycosylation occurs cotranslationally and the complex associates with the Sec61 complex at the channel-forming translocon complex that mediates protein translocation across the endoplasmic reticulum (ER). All subunits are required for a maximal enzyme activity. This is Oligosaccharyltransferase complex subunit OSTC from Gallus gallus (Chicken).